The chain runs to 110 residues: Large ribosomal subunit protein uL22 (110 aa).

Belongs to the universal ribosomal protein uL22 family. In terms of assembly, part of the 50S ribosomal subunit.

Functionally, this protein binds specifically to 23S rRNA; its binding is stimulated by other ribosomal proteins, e.g. L4, L17, and L20. It is important during the early stages of 50S assembly. It makes multiple contacts with different domains of the 23S rRNA in the assembled 50S subunit and ribosome. Its function is as follows. The globular domain of the protein is located near the polypeptide exit tunnel on the outside of the subunit, while an extended beta-hairpin is found that lines the wall of the exit tunnel in the center of the 70S ribosome. The protein is Large ribosomal subunit protein uL22 of Marinobacter nauticus (strain ATCC 700491 / DSM 11845 / VT8) (Marinobacter aquaeolei).